The primary structure comprises 816 residues: uncharacterized protein (816 aa).

503–534 (DTWTVITGGTDGIGKAYIEELCKTRGLKKFYL) contacts NADP(+). Ser641 contacts substrate. Tyr661 acts as the Proton acceptor in catalysis. 2 consecutive transmembrane segments (helical) span residues 743-763 (FGFS…SIVL) and 777-797 (VFII…FLLN).

The protein belongs to the short-chain dehydrogenases/reductases (SDR) family.

The protein localises to the membrane. This is an uncharacterized protein from Caenorhabditis elegans.